Consider the following 295-residue polypeptide: Acetylglutamate kinase (295 aa).

Substrate-binding positions include 64 to 65 (GG), arginine 86, and asparagine 190.

The protein belongs to the acetylglutamate kinase family. ArgB subfamily.

Its subcellular location is the cytoplasm. The enzyme catalyses N-acetyl-L-glutamate + ATP = N-acetyl-L-glutamyl 5-phosphate + ADP. It functions in the pathway amino-acid biosynthesis; L-arginine biosynthesis; N(2)-acetyl-L-ornithine from L-glutamate: step 2/4. Catalyzes the ATP-dependent phosphorylation of N-acetyl-L-glutamate. In Heliobacterium modesticaldum (strain ATCC 51547 / Ice1), this protein is Acetylglutamate kinase.